A 154-amino-acid polypeptide reads, in one-letter code: Putative nickel-responsive regulator (154 aa).

Residues His-95, His-106, His-108, and Cys-114 each coordinate Ni(2+).

It belongs to the transcriptional regulatory CopG/NikR family. It depends on Ni(2+) as a cofactor.

Its function is as follows. Transcriptional regulator. This chain is Putative nickel-responsive regulator, found in Caldanaerobacter subterraneus subsp. tengcongensis (strain DSM 15242 / JCM 11007 / NBRC 100824 / MB4) (Thermoanaerobacter tengcongensis).